A 419-amino-acid chain; its full sequence is Cytosine permease (419 aa).

Residues 1-19 (MSQDNNFSQGPVPQSARKG) are Cytoplasmic-facing. Residues 20 to 39 (VLALTFVMLGLTFFSASMWT) form a helical membrane-spanning segment. Residues 40 to 51 (GGTLGTGLSYHD) lie on the Periplasmic side of the membrane. Residues 52–71 (FFLAVLIGNLLLGIYTSFLG) form a helical membrane-spanning segment. The Cytoplasmic segment spans residues 72 to 100 (YIGAKTGLTTHLLARFSFGVKGSWLPSLL). A helical transmembrane segment spans residues 101–120 (LGGTQVGWFGVGVAMFAIPV). Residues 121–127 (GKATGLD) lie on the Periplasmic side of the membrane. The chain crosses the membrane as a helical span at residues 128 to 147 (INLLIAVSGLLMTVTVFFGI). The Cytoplasmic segment spans residues 148 to 152 (SALTV). The chain crosses the membrane as a helical span at residues 153–172 (LSLIAVPAIACLGGYSVWLA). Residues 173-192 (VNGMGGLDALKAVVPAQPLD) lie on the Periplasmic side of the membrane. A helical membrane pass occupies residues 193–212 (FNVALALVVGSFISAGTLTA). The Cytoplasmic segment spans residues 213–221 (DFVRFGRNA). Residues 222-242 (KLAVLVAMVAFFLGNSLMFIF) traverse the membrane as a helical segment. The Periplasmic segment spans residues 243–257 (GAAGAAALGMADISD). A helical transmembrane segment spans residues 258 to 277 (VMIAQGLLLPAIVVLGLNIW). Over 278–300 (TTNDNALYASGLGFANITGMSSK) the chain is Cytoplasmic. The chain crosses the membrane as a helical span at residues 301–320 (TLSVINGIIGTVCALWLYNN). A topological domain (periplasmic) is located at residue F321. The helical transmembrane segment at 322-341 (VGWLTFLSAAIPPVGGVIIA) threads the bilayer. At 342 to 358 (DYLMNRRRYEHFATTRM) the chain is on the cytoplasmic side. Residues 359–378 (MSVNWVAILAVALGIAAGHW) traverse the membrane as a helical segment. The Periplasmic segment spans residues 379-380 (LP). The chain crosses the membrane as a helical span at residues 381-400 (GIVPVNAVLGGALSYLILNP). At 401–419 (ILNRKTTAAMTHVEANSVE) the chain is on the cytoplasmic side.

The protein belongs to the purine-cytosine permease (2.A.39) family.

It localises to the cell inner membrane. Functionally, required for cytosine transport into the cell. This Escherichia coli O157:H7 protein is Cytosine permease (codB).